The chain runs to 262 residues: Ribosome-recycling factor, mitochondrial (262 aa).

The transit peptide at 1–55 (MALGLKCFRMVHPTFRNYLAASIRPVSEVTLKTVHERQHGHRQYMAYSAVPVRHF) directs the protein to the mitochondrion.

This sequence belongs to the RRF family.

Its subcellular location is the mitochondrion. Its function is as follows. Responsible for the disassembly of ribosomes from messenger RNA at the termination of mitochondrial protein biosynthesis. Acts in collaboration with GFM2. Promotes mitochondrial ribosome recycling by dissolution of intersubunit contacts. This is Ribosome-recycling factor, mitochondrial from Homo sapiens (Human).